Consider the following 229-residue polypeptide: MPFKKINIAIDGPSGVGKSTIAKQIANKFNYLFINTGSLYRAIAFFCQKNQISITSERKMIKHLPPNFLSLDFEGNVWLQNQNVSNLLRNDLISKNAAIIAQYPQIRKIVTEILQSFQKNHKGIIMEGRDTTYNVMPDADLKIFLWADAETRAKRRLKQNTFLNLETDFQEILKAIEHRDYLDMTRKTNPLKKTVDSIFLDTTNFTRDQIVSQISKLVFRKIGQFSLEI.

12–20 serves as a coordination point for ATP; it reads GPSGVGKST.

The protein belongs to the cytidylate kinase family. Type 1 subfamily.

It is found in the cytoplasm. It carries out the reaction CMP + ATP = CDP + ADP. The enzyme catalyses dCMP + ATP = dCDP + ADP. This chain is Cytidylate kinase, found in Mesomycoplasma hyopneumoniae (strain 232) (Mycoplasma hyopneumoniae).